Consider the following 98-residue polypeptide: Small ribosomal subunit protein uS17B (98 aa).

This sequence belongs to the universal ribosomal protein uS17 family. In terms of assembly, part of the 30S ribosomal subunit.

One of the primary rRNA binding proteins, it binds specifically to the 5'-end of 16S ribosomal RNA. In Bacteroides thetaiotaomicron (strain ATCC 29148 / DSM 2079 / JCM 5827 / CCUG 10774 / NCTC 10582 / VPI-5482 / E50), this protein is Small ribosomal subunit protein uS17B.